The chain runs to 283 residues: Thymidylate synthase (283 aa).

A dUMP-binding site is contributed by arginine 22. Cysteine 160 acts as the Nucleophile in catalysis. Residues 180-183 (RSCD), asparagine 191, and 221-223 (HIY) contribute to the dUMP site. A (6R)-5,10-methylene-5,6,7,8-tetrahydrofolate-binding site is contributed by aspartate 183. Residue serine 282 coordinates (6R)-5,10-methylene-5,6,7,8-tetrahydrofolate.

It belongs to the thymidylate synthase family. Bacterial-type ThyA subfamily. Homodimer.

It is found in the cytoplasm. The catalysed reaction is dUMP + (6R)-5,10-methylene-5,6,7,8-tetrahydrofolate = 7,8-dihydrofolate + dTMP. It participates in pyrimidine metabolism; dTTP biosynthesis. Catalyzes the reductive methylation of 2'-deoxyuridine-5'-monophosphate (dUMP) to 2'-deoxythymidine-5'-monophosphate (dTMP) while utilizing 5,10-methylenetetrahydrofolate (mTHF) as the methyl donor and reductant in the reaction, yielding dihydrofolate (DHF) as a by-product. This enzymatic reaction provides an intracellular de novo source of dTMP, an essential precursor for DNA biosynthesis. The polypeptide is Thymidylate synthase (Tolumonas auensis (strain DSM 9187 / NBRC 110442 / TA 4)).